A 313-amino-acid chain; its full sequence is D-alanine--D-alanine ligase (313 aa).

The 201-residue stretch at 108 to 308 folds into the ATP-grasp domain; the sequence is KLVWQQLGIP…YQELVVKVLA (201 aa). ATP is bound at residue 138 to 193; that stretch reads VAKLGLPLFVKPASEGSSVAVIKVKTADALVPALEEAVKFDKIVVVEKSIEGGGEY. 3 residues coordinate Mg(2+): Asp-262, Glu-275, and Asn-277.

Belongs to the D-alanine--D-alanine ligase family. Mg(2+) is required as a cofactor. The cofactor is Mn(2+).

It localises to the cytoplasm. It carries out the reaction 2 D-alanine + ATP = D-alanyl-D-alanine + ADP + phosphate + H(+). Its pathway is cell wall biogenesis; peptidoglycan biosynthesis. In terms of biological role, cell wall formation. This chain is D-alanine--D-alanine ligase, found in Paraburkholderia phymatum (strain DSM 17167 / CIP 108236 / LMG 21445 / STM815) (Burkholderia phymatum).